A 117-amino-acid polypeptide reads, in one-letter code: VKVPAPFAWNEDFATSYKFIDLEHRTLFNGLFALSEFNTRDQLLACKEVFVMHFRDEQGQMEKANYEHFEEHKGIHEGFLEKMGHWKAPVAQKDIRFGMEWLVNHIPAEDFKYKGKL.

H24, H53, E57, H72, H76, H105, and D110 together coordinate Fe cation.

Belongs to the hemerythrin family. In terms of assembly, octamer composed of two types of chains: alpha and beta.

In terms of biological role, hemerythrin is a respiratory protein in blood cells of certain marine worms. The oxygen-binding site in each chain contains two iron atoms. The protein is Hemerythrin subunit alpha of Lingula reevii (Inarticulated brachiopod).